A 32-amino-acid chain; its full sequence is Enhancer of rudimentary homolog (32 aa).

The protein belongs to the E(R) family. In terms of assembly, homodimer. Component of the methylosome, a 20S complex containing at least CLNS1A/pICln, PRMT5/SKB1, WDR77/MEP50, PRMT1 and ERH. Interacts with CHTOP.

The protein resides in the nucleus. In terms of biological role, may have a role in the cell cycle. Functionally, AP 3910 has antibacterial activity against B.megaterium. This is Enhancer of rudimentary homolog (ERH) from Sus scrofa (Pig).